A 102-amino-acid chain; its full sequence is Large ribosomal subunit protein bL21 (102 aa).

It belongs to the bacterial ribosomal protein bL21 family. As to quaternary structure, part of the 50S ribosomal subunit. Contacts protein L20.

In terms of biological role, this protein binds to 23S rRNA in the presence of protein L20. The chain is Large ribosomal subunit protein bL21 from Azorhizobium caulinodans (strain ATCC 43989 / DSM 5975 / JCM 20966 / LMG 6465 / NBRC 14845 / NCIMB 13405 / ORS 571).